Consider the following 338-residue polypeptide: Large ribosomal subunit protein uL10 (338 aa).

A disordered region spans residues 292 to 338 (LDDDLKERVSSTASAVEAKEEEAPKEEKEEEKEEEEEAPAAGLGMLF). Over residues 308–318 (EAKEEEAPKEE) the composition is skewed to basic and acidic residues. The segment covering 319–329 (KEEEKEEEEEA) has biased composition (acidic residues).

This sequence belongs to the universal ribosomal protein uL10 family. As to quaternary structure, part of the 50S ribosomal subunit. Forms part of the ribosomal stalk which helps the ribosome interact with GTP-bound translation factors. Forms a heptameric L10(L12)2(L12)2(L12)2 complex, where L10 forms an elongated spine to which the L12 dimers bind in a sequential fashion.

Functionally, forms part of the ribosomal stalk, playing a central role in the interaction of the ribosome with GTP-bound translation factors. The protein is Large ribosomal subunit protein uL10 of Methanococcus aeolicus (strain ATCC BAA-1280 / DSM 17508 / OCM 812 / Nankai-3).